A 387-amino-acid polypeptide reads, in one-letter code: MASILTLDGLYAEVPKFLPEALREGCAGKNPLSFYIQQILNLMGCDGNEYHVLFTSSSEEANTHMIMAAVRRHLLRTQQRPHVIIGAGEPPSITECVKALAQEKRCVYTIIPLKNFEIDPVAVYDAIQSNTCLACISGTNAVVKTFNKLQDISKVLRGIPLHSEVSDLVYQGCIKQNPPADSFSINSLYGFLGVGILGMKKKVMQGLGPLIFGGGLRGGSPNIPGIHAMYRTLTQQRPSIKKINTIHKLFMKTLKKHQHVYLPIGGVSAEDMSTKDMSTKDIPSTDMLVGPKGLPGYILFSVGHRAEELQKKIFTKFNIKIGRIVDLQEILFRIKIPQKYWETLLFIQLRDNLTKEDIKRVMVVLMHLDTITPRGSLPPPSYSSSFS.

Residues 58–59 and 184–186 each bind pyridoxal 5'-phosphate; these read SE and SIN.

The protein belongs to the class-V pyridoxal-phosphate-dependent aminotransferase family. NifS/IscS subfamily. Requires pyridoxal 5'-phosphate as cofactor.

It is found in the virion. The chain is NifS-like protein from African swine fever virus (isolate Tick/South Africa/Pretoriuskop Pr4/1996) (ASFV).